Reading from the N-terminus, the 234-residue chain is Ubiquinone biosynthesis O-methyltransferase (234 aa).

The S-adenosyl-L-methionine site is built by R39, G59, D80, and M124.

This sequence belongs to the methyltransferase superfamily. UbiG/COQ3 family.

It carries out the reaction a 3-demethylubiquinol + S-adenosyl-L-methionine = a ubiquinol + S-adenosyl-L-homocysteine + H(+). The catalysed reaction is a 3-(all-trans-polyprenyl)benzene-1,2-diol + S-adenosyl-L-methionine = a 2-methoxy-6-(all-trans-polyprenyl)phenol + S-adenosyl-L-homocysteine + H(+). It participates in cofactor biosynthesis; ubiquinone biosynthesis. O-methyltransferase that catalyzes the 2 O-methylation steps in the ubiquinone biosynthetic pathway. In Aliivibrio fischeri (strain MJ11) (Vibrio fischeri), this protein is Ubiquinone biosynthesis O-methyltransferase.